Consider the following 204-residue polypeptide: Ribosomal RNA small subunit methyltransferase G (204 aa).

Positions 73, 78, and 139 each coordinate S-adenosyl-L-methionine.

This sequence belongs to the methyltransferase superfamily. RNA methyltransferase RsmG family.

Its subcellular location is the cytoplasm. The catalysed reaction is guanosine(527) in 16S rRNA + S-adenosyl-L-methionine = N(7)-methylguanosine(527) in 16S rRNA + S-adenosyl-L-homocysteine. In terms of biological role, specifically methylates the N7 position of guanine in position 527 of 16S rRNA. The protein is Ribosomal RNA small subunit methyltransferase G of Coxiella burnetii (strain Dugway 5J108-111).